The chain runs to 201 residues: Putative tRNA-binding protein YtpR (201 aa).

Positions Val-90–Gln-200 constitute a tRNA-binding domain.

This Bacillus subtilis (strain 168) protein is Putative tRNA-binding protein YtpR (ytpR).